The following is a 303-amino-acid chain: Aspartate carbamoyltransferase catalytic subunit (303 aa).

Positions 51 and 52 each coordinate carbamoyl phosphate. K80 serves as a coordination point for L-aspartate. 3 residues coordinate carbamoyl phosphate: R101, H129, and Q132. Positions 162 and 221 each coordinate L-aspartate. Positions 260 and 261 each coordinate carbamoyl phosphate.

The protein belongs to the aspartate/ornithine carbamoyltransferase superfamily. ATCase family. In terms of assembly, heterooligomer of catalytic and regulatory chains.

It catalyses the reaction carbamoyl phosphate + L-aspartate = N-carbamoyl-L-aspartate + phosphate + H(+). It participates in pyrimidine metabolism; UMP biosynthesis via de novo pathway; (S)-dihydroorotate from bicarbonate: step 2/3. Catalyzes the condensation of carbamoyl phosphate and aspartate to form carbamoyl aspartate and inorganic phosphate, the committed step in the de novo pyrimidine nucleotide biosynthesis pathway. This is Aspartate carbamoyltransferase catalytic subunit from Saccharolobus islandicus (strain Y.N.15.51 / Yellowstone #2) (Sulfolobus islandicus).